The following is a 272-amino-acid chain: Tryptophan synthase alpha chain (272 aa).

Catalysis depends on proton acceptor residues Glu-49 and Asp-60.

This sequence belongs to the TrpA family. As to quaternary structure, tetramer of two alpha and two beta chains.

It catalyses the reaction (1S,2R)-1-C-(indol-3-yl)glycerol 3-phosphate + L-serine = D-glyceraldehyde 3-phosphate + L-tryptophan + H2O. It participates in amino-acid biosynthesis; L-tryptophan biosynthesis; L-tryptophan from chorismate: step 5/5. In terms of biological role, the alpha subunit is responsible for the aldol cleavage of indoleglycerol phosphate to indole and glyceraldehyde 3-phosphate. The chain is Tryptophan synthase alpha chain from Hydrogenovibrio crunogenus (strain DSM 25203 / XCL-2) (Thiomicrospira crunogena).